Reading from the N-terminus, the 1501-residue chain is Multidrug resistance protein CDR1 (1501 aa).

A disordered region spans residues 1-30; that stretch reads MSDSKMSSQDESKLEKAISQDSSSENHSIN. Topologically, residues 1 to 513 are cytoplasmic; that stretch reads MSDSKMSSQD…NFLRMKGDPS (513 aa). The span at 8–18 shows a compositional bias: basic and acidic residues; it reads SQDESKLEKAI. An ABC transporter 1 domain is found at 150–404; the sequence is LATEGFRHFQ…FEKMGWKCPQ (255 aa). The helical transmembrane segment at 514–534 threads the bilayer; the sequence is IPIFSVFGQLVMGLILSSVFY. Residue N535 is glycosylated (N-linked (GlcNAc...) asparagine). Helical transmembrane passes span 549 to 569, 598 to 618, 623 to 643, and 655 to 675; these read AMFFAVLFNAFSSLLEIMSLF, LPVKLAMSMSFNFVFYFMVNF, GRFFFYWLMCIWCTFVMSHLF, and GAMTPATVLLLAMVIYTGFVI. A glycan (N-linked (GlcNAc...) asparagine) is linked at N724. A helical membrane pass occupies residues 765–785; it reads LGITIGFAVFFLAIYIALTEF. Over 786–1195 the chain is Cytoplasmic; sequence NKGAMQKGEI…TIVQDWRSPG (410 aa). The region spanning 859–1103 is the ABC transporter 2 domain; that stretch reads FFWRDLTYQV…MINYFEKYGA (245 aa). An ATP-binding site is contributed by 895–902; it reads GASGAGKT. Transmembrane regions (helical) follow at residues 1196–1216, 1230–1250, 1281–1301, 1315–1335, 1356–1376, and 1467–1487; these read YIYSKIFLVVSAALFNGFSFF, FSVFMFFIPFNTLVQQMLPYF, IPYQVAVGTIAFFCWYYPLGL, GVLMWMLVTAFYVYTATMGQL, MCLNFCGVLAGPDVLPGFWIF, and FGIFIAFIAINIILTVIFYWL.

It belongs to the ABC transporter superfamily. ABCG family. PDR (TC 3.A.1.205) subfamily.

The protein localises to the membrane. In terms of biological role, transporter, whose physiological function is not yet established. Confers resistance to the chemical cycloheximide. This chain is Multidrug resistance protein CDR1 (CDR1), found in Candida albicans (Yeast).